The chain runs to 168 residues: Quinol oxidase subunit 2 (168 aa).

A helical transmembrane segment spans residues 9-31 (EVWFIVMLVLVLIFFSWNVYYLS).

This sequence belongs to the cytochrome c oxidase subunit 2 family.

The protein resides in the cell membrane. The enzyme catalyses 2 a quinol + O2 = 2 a quinone + 2 H2O. In terms of biological role, the terminal oxidase is the component of the respiratory chain that catalyzes the reduction of oxygen to water. Subunits 1-3 form the functional core of the enzyme complex. Functionally, subunit 2 transfers the electrons from caldariella quinol to the bimetallic center of the catalytic subunit 1 that is formed by heme A3 and Cu(B). This Sulfolobus acidocaldarius (strain ATCC 33909 / DSM 639 / JCM 8929 / NBRC 15157 / NCIMB 11770) protein is Quinol oxidase subunit 2 (soxA).